We begin with the raw amino-acid sequence, 424 residues long: Serine--tRNA ligase (424 aa).

232 to 234 (TAE) contacts L-serine. 263 to 265 (RQE) provides a ligand contact to ATP. Glu-286 contributes to the L-serine binding site. 350-353 (EIGS) contributes to the ATP binding site. Ser-386 provides a ligand contact to L-serine.

It belongs to the class-II aminoacyl-tRNA synthetase family. Type-1 seryl-tRNA synthetase subfamily. In terms of assembly, homodimer. The tRNA molecule binds across the dimer.

It localises to the cytoplasm. The enzyme catalyses tRNA(Ser) + L-serine + ATP = L-seryl-tRNA(Ser) + AMP + diphosphate + H(+). It carries out the reaction tRNA(Sec) + L-serine + ATP = L-seryl-tRNA(Sec) + AMP + diphosphate + H(+). It functions in the pathway aminoacyl-tRNA biosynthesis; selenocysteinyl-tRNA(Sec) biosynthesis; L-seryl-tRNA(Sec) from L-serine and tRNA(Sec): step 1/1. Its function is as follows. Catalyzes the attachment of serine to tRNA(Ser). Is also able to aminoacylate tRNA(Sec) with serine, to form the misacylated tRNA L-seryl-tRNA(Sec), which will be further converted into selenocysteinyl-tRNA(Sec). This chain is Serine--tRNA ligase, found in Onion yellows phytoplasma (strain OY-M).